A 441-amino-acid polypeptide reads, in one-letter code: uncharacterized protein (441 aa).

ATP is bound at residue 217–224 (GETGTGKT).

Belongs to the GSP E family.

This is an uncharacterized protein from Bacillus anthracis.